Reading from the N-terminus, the 287-residue chain is ATP synthase subunit a (287 aa).

Helical transmembrane passes span 38 to 58 (DSMV…WTAA), 96 to 116 (FIAP…AMDM), 139 to 161 (VVPT…LRFW), 187 to 207 (PLFA…EYVA), 225 to 245 (LVFM…SGVL), and 259 to 279 (LFHI…ALIY).

It belongs to the ATPase A chain family. In terms of assembly, F-type ATPases have 2 components, CF(1) - the catalytic core - and CF(0) - the membrane proton channel. CF(1) has five subunits: alpha(3), beta(3), gamma(1), delta(1), epsilon(1). CF(0) has three main subunits: a(1), b(2) and c(9-12). The alpha and beta chains form an alternating ring which encloses part of the gamma chain. CF(1) is attached to CF(0) by a central stalk formed by the gamma and epsilon chains, while a peripheral stalk is formed by the delta and b chains.

The protein resides in the cell inner membrane. Its function is as follows. Key component of the proton channel; it plays a direct role in the translocation of protons across the membrane. The sequence is that of ATP synthase subunit a from Verminephrobacter eiseniae (strain EF01-2).